We begin with the raw amino-acid sequence, 61 residues long: Probable tautomerase LL0574 (61 aa).

Catalysis depends on Pro2, which acts as the Proton acceptor; via imino nitrogen.

This sequence belongs to the 4-oxalocrotonate tautomerase family.

The protein is Probable tautomerase LL0574 of Lactococcus lactis subsp. lactis (strain IL1403) (Streptococcus lactis).